The sequence spans 151 residues: HTH-type transcriptional regulator FL11 (151 aa).

Positions 5–66 constitute an HTH asnC-type domain; it reads LDEIDKKIIK…IIDPEALGYS (62 aa). The H-T-H motif DNA-binding region spans 24 to 43; sequence LREISKITGLAESTIHERIR. 98–104 contacts L-arginine; that stretch reads ETTGDYD. L-lysine contacts are provided by residues asparagine 118, aspartate 122, and 133–135; that span reads THT. L-arginine contacts are provided by residues aspartate 122 and 133–135; that span reads THT.

Homodimer. Binds DNA as a dimer and an octamer. The octamer formed with lysine is stable in solution, but the octamer formed with arginine is unstable without DNA. When crystallized in the absence of DNA, dimers are assembled into helical cylinders with six dimers per turn. In solution, predominantly behaves as a dimer.

With respect to regulation, in the famine mode, FL11 forms dimers and acts as a repressor, leading to growth arrest. In the feast mode, in the presence of high concentrations of lysine or arginine, four dimers assemble into an octamer and cover the fl11 and lysine biosynthesis promoters. This leads to the inhibition of fl11 expression and lysine biosynthesis, decrease of the FL11 concentration in the cell, derepression of the target genes and activation of the metabolism. DNA-binding protein involved in the repression of transcription of a large number of genes, thereby arresting growth, in response to environmental changes. Binding sites are identified in promoters of approximately 200 transcription units, including genes involved in ATP synthesis, transmembrane transport, translation and DNA synthesis. In Pyrococcus horikoshii (strain ATCC 700860 / DSM 12428 / JCM 9974 / NBRC 100139 / OT-3), this protein is HTH-type transcriptional regulator FL11.